The sequence spans 309 residues: DnaJ-like protein MG002 homolog (309 aa).

In terms of domain architecture, J spans 1 to 66 (MTLYDLLELP…KAEYDAMLRF (66 aa)).

This Mycoplasma pneumoniae (strain ATCC 29342 / M129 / Subtype 1) (Mycoplasmoides pneumoniae) protein is DnaJ-like protein MG002 homolog.